The following is a 919-amino-acid chain: MFS-type transporter clz9 (919 aa).

Polar residues predominate over residues 1 to 11 (MAASTKPTTKL). The tract at residues 1-33 (MAASTKPTTKLSTEEDDVSRRDSESSADFMKSN) is disordered. The chain crosses the membrane as a helical span at residues 69 to 89 (VVASFAAAISPFSTSTYYPVV). Asparagine 104 is a glycosylation site (N-linked (GlcNAc...) asparagine). 3 helical membrane-spanning segments follow: residues 132 to 152 (PMFL…ALQN), 192 to 212 (LIYA…IGGL), and 222 to 242 (VFWF…IFFG). N-linked (GlcNAc...) asparagine glycosylation occurs at asparagine 260. The next 4 membrane-spanning stretches (helical) occupy residues 303 to 323 (FILS…TSVL), 333 to 353 (YDAV…LLAY), 393 to 413 (LGFV…YGWQ), and 418 to 438 (APLA…TGVM). Asparagine 461 is a glycosylation site (N-linked (GlcNAc...) asparagine). A helical transmembrane segment spans residues 465-485 (LLLGAGAVAVVGPLNKSAGIG). Residues 641–809 (REWVTLIQGI…FTSANICSSF (169 aa)) enclose the DDE-1 domain. Residues 840 to 897 (EAPWEAKTPSNRKKKQIQKRGTLTKGEGEDTLAQKEADQQIEREQRQGGEQSGRSRQA) are disordered. Over residues 865-886 (GEGEDTLAQKEADQQIEREQRQ) the composition is skewed to basic and acidic residues. The span at 887–896 (GGEQSGRSRQ) shows a compositional bias: low complexity. The N-linked (GlcNAc...) asparagine glycan is linked to asparagine 915.

The protein belongs to the major facilitator superfamily. CAR1 family.

The protein resides in the membrane. Functionally, MFS-type transporter; part of the gene cluster that mediates the biosynthesis of squalestatin S1 (SQS1, also known as zaragozic acid A), a heavily oxidized fungal polyketide that offers potent cholesterol lowering activity by targeting squalene synthase (SS). This Cochliobolus lunatus (Filamentous fungus) protein is MFS-type transporter clz9.